A 167-amino-acid polypeptide reads, in one-letter code: Small ribosomal subunit protein uS5 (167 aa).

In terms of domain architecture, S5 DRBM spans 12–75 (LQEKLIAVNR…EKARRNMVTV (64 aa)).

The protein belongs to the universal ribosomal protein uS5 family. As to quaternary structure, part of the 30S ribosomal subunit. Contacts proteins S4 and S8.

In terms of biological role, with S4 and S12 plays an important role in translational accuracy. Its function is as follows. Located at the back of the 30S subunit body where it stabilizes the conformation of the head with respect to the body. This Shewanella denitrificans (strain OS217 / ATCC BAA-1090 / DSM 15013) protein is Small ribosomal subunit protein uS5.